A 208-amino-acid polypeptide reads, in one-letter code: Probable nicotinate-nucleotide adenylyltransferase (208 aa).

Belongs to the NadD family.

The enzyme catalyses nicotinate beta-D-ribonucleotide + ATP + H(+) = deamido-NAD(+) + diphosphate. It participates in cofactor biosynthesis; NAD(+) biosynthesis; deamido-NAD(+) from nicotinate D-ribonucleotide: step 1/1. Functionally, catalyzes the reversible adenylation of nicotinate mononucleotide (NaMN) to nicotinic acid adenine dinucleotide (NaAD). The sequence is that of Probable nicotinate-nucleotide adenylyltransferase from Acidothermus cellulolyticus (strain ATCC 43068 / DSM 8971 / 11B).